The chain runs to 317 residues: Cyclin-dependent kinase 1 (317 aa).

In terms of domain architecture, Protein kinase spans 7–292 (YQRQEKVGEG…AKRALIHPYF (286 aa)). ATP contacts are provided by residues 13 to 21 (VGEGTYGVV) and K37. T17 is subject to Phosphothreonine. The residue at position 18 (Y18) is a Phosphotyrosine; by SWE1. D133 serves as the catalytic Proton acceptor. A Phosphothreonine; by CAK modification is found at T166. Residues 296–317 (DDRDHNNYNEDNIGIDKHQNMQ) are disordered.

This sequence belongs to the protein kinase superfamily. CMGC Ser/Thr protein kinase family. CDC2/CDKX subfamily. In terms of assembly, forms several complexes with cyclins CCN1, CLB2, CLN3, and HGC1. The CDC28-CCN1 complex associates with septin CDC11 upon hyphal induction. Interacts with IQG1, RFA2, and HSP90. Phosphorylated at Tyr-18 by SWE1 in a cell cycle-dependent manner. Yeast-form and hyphal cells display similar dynamics of phosphorylation and dephosphorylation of Tyr-18. Tyr-18 phosphorylation leads to inhibition of CDC28 kinase activity.

It catalyses the reaction L-seryl-[protein] + ATP = O-phospho-L-seryl-[protein] + ADP + H(+). It carries out the reaction L-threonyl-[protein] + ATP = O-phospho-L-threonyl-[protein] + ADP + H(+). Phosphorylation at Thr-17 or Tyr-18 inactivates the enzyme, while phosphorylation at Thr-166 activates it. Its function is as follows. Cyclin-dependent kinase that acts as a master regulator of the mitotic and meiotic cell cycles. May drive the G1-S transition. Plays a role in mitotic exit. Plays a role in the expression of morphology-related transcription factors, and especially hyphae-specific genes. Binds distinct cyclin subunits as cells progress through the division cycle or flamentous growth. The CDC28-CLB2 complex regulates cytokinesis partly by phosphorylating the actomyosin ring component IQG1. The CDC28-CLN3 complex phosphorylates SLA1 which regulates cortical actin patch dynamics. The CDC28-CCN1 complex phosphorylates CDC11 and SEC2 upon induction of filamentous growth. The CDC28-HGC1 complex also phosphorylates SEC2 and maintains CDC11 phosphorylation throughout hyphal growth. Moreover, the CDC28-HGC1 complex phosphorylates and prevents RGA2 from localizing to hyphal tips, leading to localized CDC42 activation for hyphal extension. CDC28-HGC1 phosphorylation of EFG1 represses cell separation genes during hyphal growth. Additional substrates for CDC28 are RFA2 in G1-phase; MOB2, which is required for the maintenance of polarisome components and for inhibition of cell separation in hyphae; and GIN4 to regulate its association to SEP7 and subsequent septin ring assembly. The polypeptide is Cyclin-dependent kinase 1 (Candida albicans (strain SC5314 / ATCC MYA-2876) (Yeast)).